We begin with the raw amino-acid sequence, 496 residues long: ADP-dependent glucokinase (496 aa).

The signal sequence occupies residues 1-22; that stretch reads MALWRGSACAGFLALAVGCVFL. In terms of domain architecture, ADPK spans 52–496; it reads SPESRLAAAW…GLFYSEARPD (445 aa). Mg(2+) contacts are provided by Glu-297, Glu-328, and Asp-481. Asp-481 (proton acceptor) is an active-site residue.

This sequence belongs to the ADP-dependent glucokinase family. In terms of assembly, monomer. The cofactor is Mg(2+).

The protein localises to the secreted. It carries out the reaction D-glucose + ADP = D-glucose 6-phosphate + AMP + H(+). The protein operates within carbohydrate degradation; glycolysis. In terms of biological role, catalyzes the phosphorylation of D-glucose to D-glucose 6-phosphate using ADP as the phosphate donor. GDP and CDP can replace ADP, but with reduced efficiency. This chain is ADP-dependent glucokinase (Adpgk), found in Mus musculus (Mouse).